A 317-amino-acid chain; its full sequence is Metaxin-1 (317 aa).

Residues Lys-38, Lys-41, Lys-78, and Lys-168 each participate in a glycyl lysine isopeptide (Lys-Gly) (interchain with G-Cter in ubiquitin) cross-link. Residues 272 to 292 form a helical membrane-spanning segment; sequence ILSVLAGLAAMVGYALLSGIV.

This sequence belongs to the metaxin family. Interacts with MTX2/metaxin-2. Associates with the mitochondrial contact site and cristae organizing system (MICOS) complex, composed of at least MICOS10/MIC10, CHCHD3/MIC19, CHCHD6/MIC25, APOOL/MIC27, IMMT/MIC60, APOO/MIC23/MIC26 and QIL1/MIC13. This complex was also known under the names MINOS or MitOS complex. The MICOS complex associates with mitochondrial outer membrane proteins SAMM50, MTX1 and MTX2 (together described as components of the mitochondrial outer membrane sorting assembly machinery (SAM) complex) and DNAJC11, mitochondrial inner membrane protein TMEM11 and with HSPA9. The MICOS and SAM complexes together with DNAJC11 are part of a large protein complex spanning both membranes termed the mitochondrial intermembrane space bridging (MIB) complex. Interacts with ARMC1. Post-translationally, ubiquitinated by PRKN during mitophagy, leading to its degradation and enhancement of mitophagy. Deubiquitinated by USP30. In terms of tissue distribution, ubiquitous. Higher levels are seen in the kidney as compared to other tissues.

The protein localises to the mitochondrion outer membrane. Involved in transport of proteins into the mitochondrion. Essential for embryonic development. The sequence is that of Metaxin-1 (Mtx1) from Mus musculus (Mouse).